The sequence spans 507 residues: Extracellular elastase (507 aa).

Residues M1 to A28 form the signal peptide. A propeptide spanning residues K29–E207 is cleaved from the precursor. A Ca(2+)-binding site is contributed by D347. H351 contributes to the Zn(2+) binding site. The active site involves E352. Zn(2+)-binding residues include H355 and E375. 9 residues coordinate Ca(2+): D386, E388, D389, L391, E394, Y397, T398, V401, and D404. H435 (proton donor) is an active-site residue.

The protein belongs to the peptidase M4 family. The cofactor is Ca(2+). It depends on Zn(2+) as a cofactor.

Its subcellular location is the secreted. Functionally, protease that has a low substrate specificity. Glucagon is preferentially cleaved between aromatic (Phe) and hydrophobic (Val) amino acids. Hydrolyzes casein and elastin. The chain is Extracellular elastase (sepA) from Staphylococcus epidermidis (strain ATCC 12228 / FDA PCI 1200).